A 172-amino-acid polypeptide reads, in one-letter code: R-phycocyanin beta chain (172 aa).

The (2R,3E)-phycoerythrobilin site is built by Asn-35 and Asp-39. Residues Asn-72, Cys-82, and Arg-84 to Asp-85 contribute to the (2R,3E)-phycocyanobilin site. N4-methylasparagine is present on Asn-72. Residues Pro-149 to Gly-151 and Cys-153 contribute to the (2R,3E)-phycoerythrobilin site.

This sequence belongs to the phycobiliprotein family. As to quaternary structure, heterododecamer of 6 alpha and 6 beta chains. The basic functional unit of phycobiliproteins is a ring-shaped hexamer formed from two back-to-back trimers contacting via the alpha chain subunits. The trimers are composed of alpha/beta subunit heterodimers arranged around a three-fold axis of symmetry. The phycoerythrins also contain a gamma subunit which is located in the center of the hexamer. Post-translationally, contains one covalently linked phycocyanobilin chromophore and one covalently linked phycoerythrobilin chromophore.

Its subcellular location is the plastid. The protein localises to the chloroplast thylakoid membrane. In terms of biological role, light-harvesting photosynthetic tetrapyrrole chromophore-protein from the phycobiliprotein complex (phycobilisome, PBS). Phycocyanin is the major phycobiliprotein in the PBS rod. This Polysiphonia urceolata (Red alga) protein is R-phycocyanin beta chain (rpcB).